The primary structure comprises 101 residues: NADH-quinone oxidoreductase subunit K (101 aa).

A run of 3 helical transmembrane segments spans residues 4-24 (LAHF…GIFL), 30-50 (IVLL…FVAF), and 61-81 (VFVF…LAIL).

The protein belongs to the complex I subunit 4L family. NDH-1 is composed of 14 different subunits. Subunits NuoA, H, J, K, L, M, N constitute the membrane sector of the complex.

It is found in the cell inner membrane. The enzyme catalyses a quinone + NADH + 5 H(+)(in) = a quinol + NAD(+) + 4 H(+)(out). NDH-1 shuttles electrons from NADH, via FMN and iron-sulfur (Fe-S) centers, to quinones in the respiratory chain. The immediate electron acceptor for the enzyme in this species is believed to be ubiquinone. Couples the redox reaction to proton translocation (for every two electrons transferred, four hydrogen ions are translocated across the cytoplasmic membrane), and thus conserves the redox energy in a proton gradient. The sequence is that of NADH-quinone oxidoreductase subunit K from Cupriavidus metallidurans (strain ATCC 43123 / DSM 2839 / NBRC 102507 / CH34) (Ralstonia metallidurans).